Here is a 103-residue protein sequence, read N- to C-terminus: N(4)-acetylcytidine amidohydrolase (103 aa).

Residues 6-94 form the ASCH domain; the sequence is ITFFQRFQND…IAEIYPNQTQ (89 aa). The active-site Proton acceptor is K21. The active-site Nucleophile is the T24. The active-site Proton donor is the E74.

It belongs to the N(4)-acetylcytidine amidohydrolase family.

The catalysed reaction is N(4)-acetylcytidine + H2O = cytidine + acetate + H(+). It catalyses the reaction N(4)-acetyl-2'-deoxycytidine + H2O = 2'-deoxycytidine + acetate + H(+). The enzyme catalyses N(4)-acetylcytosine + H2O = cytosine + acetate + H(+). Its function is as follows. Catalyzes the hydrolysis of N(4)-acetylcytidine (ac4C). The chain is N(4)-acetylcytidine amidohydrolase (yqfB) from Salmonella typhi.